Consider the following 278-residue polypeptide: Alcohol dehydrogenase-related 31 kDa protein (278 aa).

NAD(+) is bound at residue 11–34 (YVADCGGIALETSKVLMTKNIAKL). A substrate-binding site is contributed by serine 139. The active-site Proton acceptor is the tyrosine 152.

The protein belongs to the short-chain dehydrogenases/reductases (SDR) family.

In Drosophila persimilis (Fruit fly), this protein is Alcohol dehydrogenase-related 31 kDa protein (Adhr).